The chain runs to 547 residues: Methyl-accepting chemotaxis citrate transducer (547 aa).

Residues 1–5 (MKNIK) lie on the Cytoplasmic side of the membrane. The chain crosses the membrane as a helical span at residues 6–29 (VITGVIATLGIFSALLLVTGILFY). The Periplasmic segment spans residues 30–189 (SAVSSDRLNF…ASDQNQSSFT (160 aa)). A helical transmembrane segment spans residues 190–213 (QMQWTLGIILLIVLIVLAFIWLGL). The Cytoplasmic segment spans residues 214–547 (QRVLLRPLQR…AAEQANWESF (334 aa)). The region spanning 215–267 (RVLLRPLQRIMAHIQTIADGDLTHEIEAEGRSEMGQLAAGLKTMQQSLIRTVS) is the HAMP domain. The Methyl-accepting transducer domain maps to 272–501 (NADSIYTGAG…ESAAAAAALE (230 aa)). Residue glutamine 296 is modified to Glutamate methyl ester (Gln). Glutamate 303 carries the post-translational modification Glutamate methyl ester (Glu). Glutamine 310 carries the glutamate methyl ester (Gln) modification. Positions 317-336 (QNTDNARQATGLAKTASETA) are disordered. Glutamate methyl ester (Glu) occurs at positions 492 and 501. The disordered stretch occupies residues 518 to 547 (KQPRREASPTTLSKGLTPQPAAEQANWESF).

Belongs to the methyl-accepting chemotaxis (MCP) protein family. Methylation level is increased by citrate and decreased by phenol.

The protein localises to the cell inner membrane. Functionally, acts as a receptor for citrate and mediates taxis away from phenol. Also mediates an attractant response to metal-citrate complexes. This is Methyl-accepting chemotaxis citrate transducer (tcp) from Salmonella typhimurium (strain LT2 / SGSC1412 / ATCC 700720).